The chain runs to 474 residues: Protein nucleotidyltransferase YdiU (474 aa).

The ATP site is built by Gly89, Gly91, Arg92, Lys112, Asp124, Gly125, Arg178, and Arg185. Asp262 functions as the Proton acceptor in the catalytic mechanism. Mg(2+) is bound by residues Asn263 and Asp272. Asp272 is a binding site for ATP.

This sequence belongs to the SELO family. The cofactor is Mg(2+). Mn(2+) is required as a cofactor.

The catalysed reaction is L-seryl-[protein] + ATP = 3-O-(5'-adenylyl)-L-seryl-[protein] + diphosphate. It catalyses the reaction L-threonyl-[protein] + ATP = 3-O-(5'-adenylyl)-L-threonyl-[protein] + diphosphate. The enzyme catalyses L-tyrosyl-[protein] + ATP = O-(5'-adenylyl)-L-tyrosyl-[protein] + diphosphate. It carries out the reaction L-histidyl-[protein] + UTP = N(tele)-(5'-uridylyl)-L-histidyl-[protein] + diphosphate. The catalysed reaction is L-seryl-[protein] + UTP = O-(5'-uridylyl)-L-seryl-[protein] + diphosphate. It catalyses the reaction L-tyrosyl-[protein] + UTP = O-(5'-uridylyl)-L-tyrosyl-[protein] + diphosphate. In terms of biological role, nucleotidyltransferase involved in the post-translational modification of proteins. It can catalyze the addition of adenosine monophosphate (AMP) or uridine monophosphate (UMP) to a protein, resulting in modifications known as AMPylation and UMPylation. The sequence is that of Protein nucleotidyltransferase YdiU from Trichodesmium erythraeum (strain IMS101).